The primary structure comprises 551 residues: Electron transfer flavoprotein-ubiquinone oxidoreductase (551 aa).

Val10–Cys24 lines the FAD pocket. Cys496, Cys520, Cys523, and Cys526 together coordinate [4Fe-4S] cluster. One can recognise a 4Fe-4S ferredoxin-type domain in the interval Lys511–Pro540.

The protein belongs to the ETF-QO/FixC family. It depends on [4Fe-4S] cluster as a cofactor. FAD serves as cofactor.

It carries out the reaction a ubiquinone + reduced [electron-transfer flavoprotein] = a ubiquinol + oxidized [electron-transfer flavoprotein] + H(+). In terms of biological role, accepts electrons from ETF and reduces ubiquinone. The protein is Electron transfer flavoprotein-ubiquinone oxidoreductase of Pseudomonas aeruginosa (strain ATCC 15692 / DSM 22644 / CIP 104116 / JCM 14847 / LMG 12228 / 1C / PRS 101 / PAO1).